Reading from the N-terminus, the 676-residue chain is Probable LRR receptor-like serine/threonine-protein kinase At4g31250 (676 aa).

An N-terminal signal peptide occupies residues 1–26 (MTRDDKFPIVYSLLLIVLLFVSPIYG). Topologically, residues 27–242 (DGDADALLKF…LLPCRYTRPP (216 aa)) are extracellular. 3 N-linked (GlcNAc...) asparagine glycosylation sites follow: Asn-42, Asn-73, and Asn-83. LRR repeat units follow at residues 98–122 (IRGL…IDGL), 123–146 (VSLA…LFSG), 148–171 (KALL…LGKL), 172–195 (PKLT…KQKN), and 197–218 (VTVN…GLMN). A glycan (N-linked (GlcNAc...) asparagine) is linked at Asn-218. A helical membrane pass occupies residues 243-263 (FFTVFLLALTILAVVVLITVF). Residues 264–676 (LSVCILSRRQ…RAMTEEFSLM (413 aa)) lie on the Cytoplasmic side of the membrane. Residues 319–330 (TVQRDSTATSGA) are compositionally biased toward polar residues. Residues 319–347 (TVQRDSTATSGAISVGGLSPDEDKRGDQR) are disordered. The Protein kinase domain occupies 366 to 640 (RASAEVLGSG…HEAVDRIEEV (275 aa)). A Phosphoserine modification is found at Ser-368. ATP contacts are provided by residues 372-380 (LGSGGFGSS) and Lys-394. Ser-446 and Ser-543 each carry phosphoserine. The segment at 641–676 (DRDAGGGQESVRSSYVTASDGDHRSSRAMTEEFSLM) is disordered.

Belongs to the protein kinase superfamily. Ser/Thr protein kinase family.

It localises to the membrane. The enzyme catalyses L-seryl-[protein] + ATP = O-phospho-L-seryl-[protein] + ADP + H(+). It catalyses the reaction L-threonyl-[protein] + ATP = O-phospho-L-threonyl-[protein] + ADP + H(+). The chain is Probable LRR receptor-like serine/threonine-protein kinase At4g31250 from Arabidopsis thaliana (Mouse-ear cress).